The sequence spans 685 residues: Sodium-dependent phosphate transporter 1-B (685 aa).

6 helical membrane passes run Ile21–Phe41, Ala66–Ser86, Leu106–Phe126, Ile162–Phe182, Ala207–Phe227, and Gly234–Val254. The interval Glu489–Asp511 is disordered. Over residues Val496–Asp511 the composition is skewed to basic and acidic residues. 4 helical membrane passes run Val517–Gly537, Ala565–Trp585, Phe606–Ile626, and Ile656–Ala676.

This sequence belongs to the inorganic phosphate transporter (PiT) (TC 2.A.20) family.

Its subcellular location is the membrane. In terms of biological role, sodium-phosphate symporter which plays a fundamental housekeeping role in phosphate transport. The protein is Sodium-dependent phosphate transporter 1-B (slc20a1-b) of Xenopus laevis (African clawed frog).